The following is a 468-amino-acid chain: Inositol polyphosphate 5-phosphatase K (468 aa).

Positions 34 to 337 (VHVVTWNVAS…SDHKPVTGTF (304 aa)) are catalytic. The interval 318-448 (NYVSHMAYSI…HSVVGISQPF (131 aa)) is required for interaction with GPR78 and PAK1. The required for ruffle localization stretch occupies residues 340 to 468 (ELNPLMSVPL…DTLYEPEPQI (129 aa)).

This sequence belongs to the inositol 1,4,5-trisphosphate 5-phosphatase type II family. As to quaternary structure, interacts with GPR78; necessary for INPP5K localization at the endoplasmic reticulum. Interacts with PAK1; competes with GPR78. In terms of tissue distribution, expressed in the skeletal muscle and the eye.

The protein resides in the endoplasmic reticulum. It is found in the cytoplasm. The enzyme catalyses 1D-myo-inositol 1,4,5-trisphosphate + H2O = 1D-myo-inositol 1,4-bisphosphate + phosphate. It catalyses the reaction 1,2-dioctanoyl-sn-glycero-3-phospho-(1D-myo-inositol-3,4,5-trisphosphate) + H2O = 1,2-dioctanoyl-sn-glycero-3-phospho-(1D-myo-inositol-3,4-bisphosphate) + phosphate. It carries out the reaction 1D-myo-inositol 1,3,4,5-tetrakisphosphate + H2O = 1D-myo-inositol 1,3,4-trisphosphate + phosphate. The catalysed reaction is a 1,2-diacyl-sn-glycero-3-phospho-(1D-myo-inositol-4,5-bisphosphate) + H2O = a 1,2-diacyl-sn-glycero-3-phospho-(1D-myo-inositol 4-phosphate) + phosphate. The enzyme catalyses a 1,2-diacyl-sn-glycero-3-phospho-(1D-myo-inositol-3,4,5-trisphosphate) + H2O = a 1,2-diacyl-sn-glycero-3-phospho-(1D-myo-inositol-3,4-bisphosphate) + phosphate. In terms of biological role, inositol 5-phosphatase which acts on inositol 1,4,5-trisphosphate, inositol 1,3,4,5-tetrakisphosphate, phosphatidylinositol 4,5-bisphosphate and phosphatidylinositol 3,4,5-trisphosphate. Has 6-fold higher affinity for phosphatidylinositol 4,5-bisphosphate than for inositol 1,4,5-trisphosphate. Negatively regulates assembly of the actin cytoskeleton. Controls insulin-dependent glucose uptake among inositol 3,4,5-trisphosphate phosphatases; therefore, is the specific regulator for insulin signaling in skeletal muscle. This Mus musculus (Mouse) protein is Inositol polyphosphate 5-phosphatase K.